A 374-amino-acid polypeptide reads, in one-letter code: Regulator of G-protein signaling 20 (374 aa).

The span at 1–11 (MPRLSQDNQQG) shows a compositional bias: polar residues. Disordered stretches follow at residues 1-21 (MPRLSQDNQQGHQKHFSRPSR) and 135-158 (PPGGRLPREVDASAGQSSSIPPMG). Residues 12–21 (HQKHFSRPSR) show a composition bias toward basic residues. Positions 248-364 (SFDKLMLTPA…MNSALYKDLL (117 aa)) constitute an RGS domain.

Forms a complex with G(alpha)z/i2 subunits and mu-opioid receptors; the formation of this complex results in mu-opioid receptor desensitization. Interacts with OPRM1. In terms of processing, fatty acylated. Heavily palmitoylated in the cysteine string motif. Post-translationally, N- and O-glycosylated in synapsomal membranes. Serine phosphorylated in synapsomal membranes. In terms of processing, sumoylated with SUMO1 and SUMO2 in synaptosomes. The sumoylated forms act as a scaffold for sequestering mu-opioid receptor-activated G(alpha) subunits. Retinal-specific. Expressed throughout the retina, including photoreceptors.

Its subcellular location is the membrane. It localises to the nucleus. The protein localises to the cytoplasm. In terms of biological role, inhibits signal transduction by increasing the GTPase activity of G protein alpha subunits thereby driving them into their inactive GDP-bound form. Binds selectively to G(z)-alpha and G(alpha)-i2 subunits, accelerates their GTPase activity and regulates their signaling activities. The G(z)-alpha activity is inhibited by the phosphorylation and palmitoylation of the G-protein. Negatively regulates mu-opioid receptor-mediated activation of the G-proteins. The chain is Regulator of G-protein signaling 20 (RGS20) from Bos taurus (Bovine).